A 574-amino-acid polypeptide reads, in one-letter code: Urease subunit alpha (574 aa).

The 444-residue stretch at 131–574 folds into the Urease domain; the sequence is GAIDSHIHFI…LPMAQRYLLL (444 aa). Ni(2+) is bound by residues His-136, His-138, and Lys-219. N6-carboxylysine is present on Lys-219. His-221 contributes to the substrate binding site. Ni(2+)-binding residues include His-248 and His-274. The Proton donor role is filled by His-322. Asp-362 is a Ni(2+) binding site. The interval 384-403 is disordered; that stretch reads KVQRGPLPEDAANPRGSRND.

The protein belongs to the metallo-dependent hydrolases superfamily. Urease alpha subunit family. Heterotrimer of UreA (gamma), UreB (beta) and UreC (alpha) subunits. Three heterotrimers associate to form the active enzyme. Requires Ni cation as cofactor. Post-translationally, carboxylation allows a single lysine to coordinate two nickel ions.

Its subcellular location is the cytoplasm. The enzyme catalyses urea + 2 H2O + H(+) = hydrogencarbonate + 2 NH4(+). It functions in the pathway nitrogen metabolism; urea degradation; CO(2) and NH(3) from urea (urease route): step 1/1. This chain is Urease subunit alpha, found in Prochlorococcus marinus (strain MIT 9313).